We begin with the raw amino-acid sequence, 63 residues long: Cytochrome c oxidase subunit 7C, mitochondrial (63 aa).

The N-terminal 16 residues, 1-16 (MLGQSIRRFTTSVVRR), are a transit peptide targeting the mitochondrion. Over 17-33 (SHYEEGPGKNIPFSVEN) the chain is Mitochondrial matrix. Lys25 is modified (N6-acetyllysine; alternate). At Lys25 the chain carries N6-succinyllysine; alternate. Residues 34–60 (KWRLLAMMTLFFGSGFAAPFFIVRHQL) form a helical membrane-spanning segment. At 61–63 (LKK) the chain is on the mitochondrial intermembrane side.

It belongs to the cytochrome c oxidase VIIc family. In terms of assembly, component of the cytochrome c oxidase (complex IV, CIV), a multisubunit enzyme composed of 14 subunits. The complex is composed of a catalytic core of 3 subunits MT-CO1, MT-CO2 and MT-CO3, encoded in the mitochondrial DNA, and 11 supernumerary subunits COX4I1 (or COX4I2), COX5A, COX5B, COX6A2 (or COX6A1), COX6B1 (or COX6B2), COX6C, COX7A1 (or COX7A2), COX7B, COX7C, COX8B and NDUFA4, which are encoded in the nuclear genome. The complex exists as a monomer or a dimer and forms supercomplexes (SCs) in the inner mitochondrial membrane with NADH-ubiquinone oxidoreductase (complex I, CI) and ubiquinol-cytochrome c oxidoreductase (cytochrome b-c1 complex, complex III, CIII), resulting in different assemblies (supercomplex SCI(1)III(2)IV(1) and megacomplex MCI(2)III(2)IV(2)). Interacts with RAB5IF. As to expression, liver, heart, muscle and brain, contain the same isoform of COX VIIc, but at different concentrations.

Its subcellular location is the mitochondrion inner membrane. Its pathway is energy metabolism; oxidative phosphorylation. Its function is as follows. Component of the cytochrome c oxidase, the last enzyme in the mitochondrial electron transport chain which drives oxidative phosphorylation. The respiratory chain contains 3 multisubunit complexes succinate dehydrogenase (complex II, CII), ubiquinol-cytochrome c oxidoreductase (cytochrome b-c1 complex, complex III, CIII) and cytochrome c oxidase (complex IV, CIV), that cooperate to transfer electrons derived from NADH and succinate to molecular oxygen, creating an electrochemical gradient over the inner membrane that drives transmembrane transport and the ATP synthase. Cytochrome c oxidase is the component of the respiratory chain that catalyzes the reduction of oxygen to water. Electrons originating from reduced cytochrome c in the intermembrane space (IMS) are transferred via the dinuclear copper A center (CU(A)) of subunit 2 and heme A of subunit 1 to the active site in subunit 1, a binuclear center (BNC) formed by heme A3 and copper B (CU(B)). The BNC reduces molecular oxygen to 2 water molecules using 4 electrons from cytochrome c in the IMS and 4 protons from the mitochondrial matrix. The chain is Cytochrome c oxidase subunit 7C, mitochondrial (COX7C) from Bos taurus (Bovine).